The primary structure comprises 404 residues: CCA-adding enzyme (404 aa).

Positions 27 and 30 each coordinate ATP. G27 and R30 together coordinate CTP. Residues D40 and D42 each coordinate Mg(2+). Positions 111, 154, 157, 160, and 163 each coordinate ATP. 5 residues coordinate CTP: R111, D154, R157, R160, and R163.

This sequence belongs to the tRNA nucleotidyltransferase/poly(A) polymerase family. Bacterial CCA-adding enzyme type 3 subfamily. Homodimer. It depends on Mg(2+) as a cofactor.

The catalysed reaction is a tRNA precursor + 2 CTP + ATP = a tRNA with a 3' CCA end + 3 diphosphate. It carries out the reaction a tRNA with a 3' CCA end + 2 CTP + ATP = a tRNA with a 3' CCACCA end + 3 diphosphate. Its function is as follows. Catalyzes the addition and repair of the essential 3'-terminal CCA sequence in tRNAs without using a nucleic acid template. Adds these three nucleotides in the order of C, C, and A to the tRNA nucleotide-73, using CTP and ATP as substrates and producing inorganic pyrophosphate. tRNA 3'-terminal CCA addition is required both for tRNA processing and repair. Also involved in tRNA surveillance by mediating tandem CCA addition to generate a CCACCA at the 3' terminus of unstable tRNAs. While stable tRNAs receive only 3'-terminal CCA, unstable tRNAs are marked with CCACCA and rapidly degraded. This is CCA-adding enzyme from Geobacillus thermodenitrificans (strain NG80-2).